A 270-amino-acid polypeptide reads, in one-letter code: Elongation factor Ts (270 aa).

Residues 77 to 80 (TDFV) are involved in Mg(2+) ion dislocation from EF-Tu.

The protein belongs to the EF-Ts family.

The protein resides in the cytoplasm. Its function is as follows. Associates with the EF-Tu.GDP complex and induces the exchange of GDP to GTP. It remains bound to the aminoacyl-tRNA.EF-Tu.GTP complex up to the GTP hydrolysis stage on the ribosome. This is Elongation factor Ts from Nocardioides sp. (strain ATCC BAA-499 / JS614).